The chain runs to 436 residues: ATP-dependent 6-phosphofructokinase (436 aa).

Residues glycine 90, 155–156, and 180–183 contribute to the ATP site; these read RG and GDGT. Residue aspartate 181 participates in Mg(2+) binding. Residues 209–211, 254–256, glutamate 307, and 362–365 each bind substrate; these read TID, MGR, and YMIR. Aspartate 211 functions as the Proton acceptor in the catalytic mechanism.

The protein belongs to the phosphofructokinase type A (PFKA) family. PPi-dependent PFK group II subfamily. Atypical ATP-dependent clade 'X' sub-subfamily. Homodimer. Aggregates to a homotetramer after activation by ATP. Requires Mg(2+) as cofactor.

The protein resides in the cytoplasm. It carries out the reaction beta-D-fructose 6-phosphate + ATP = beta-D-fructose 1,6-bisphosphate + ADP + H(+). The protein operates within carbohydrate degradation; glycolysis; D-glyceraldehyde 3-phosphate and glycerone phosphate from D-glucose: step 3/4. Activated by nucleoside triphosphates. Inhibited by phosphoenolpyruvate. EDTA and biphosphonates play the role of inhibitors of kinase activity. In terms of biological role, catalyzes the phosphorylation of D-fructose 6-phosphate to fructose 1,6-bisphosphate by ATP, the first committing step of glycolysis. This Entamoeba histolytica (strain ATCC 30459 / HM-1:IMSS / ABRM) protein is ATP-dependent 6-phosphofructokinase (PPi-PFK).